The following is a 969-amino-acid chain: Leucine--tRNA ligase (969 aa).

The 'HIGH' region signature appears at 45 to 55 (PYTNAPLHIGH). Positions 649–653 (KMSKS) match the 'KMSKS' region motif. An ATP-binding site is contributed by K652.

The protein belongs to the class-I aminoacyl-tRNA synthetase family.

The protein resides in the cytoplasm. The enzyme catalyses tRNA(Leu) + L-leucine + ATP = L-leucyl-tRNA(Leu) + AMP + diphosphate. This Staphylothermus marinus (strain ATCC 43588 / DSM 3639 / JCM 9404 / F1) protein is Leucine--tRNA ligase.